Consider the following 179-residue polypeptide: NADH dehydrogenase [ubiquinone] 1 beta subcomplex subunit 9 (179 aa).

N-acetylalanine is present on Ala-2. Position 85 is a phosphoserine (Ser-85).

The protein belongs to the complex I LYR family. As to quaternary structure, mammalian complex I is composed of 45 different subunits.

It is found in the mitochondrion inner membrane. Accessory subunit of the mitochondrial membrane respiratory chain NADH dehydrogenase (Complex I), that is believed to be not involved in catalysis. Complex I functions in the transfer of electrons from NADH to the respiratory chain. The immediate electron acceptor for the enzyme is believed to be ubiquinone. The polypeptide is NADH dehydrogenase [ubiquinone] 1 beta subcomplex subunit 9 (Ndufb9) (Mus musculus (Mouse)).